The primary structure comprises 91 residues: Small ribosomal subunit protein bS20 (91 aa).

The span at 1-21 shows a compositional bias: basic and acidic residues; it reads MPLHKSAEKRLRQAARRNERN. Residues 1-24 form a disordered region; that stretch reads MPLHKSAEKRLRQAARRNERNRAR.

The protein belongs to the bacterial ribosomal protein bS20 family.

Functionally, binds directly to 16S ribosomal RNA. The chain is Small ribosomal subunit protein bS20 from Chlorobaculum parvum (strain DSM 263 / NCIMB 8327) (Chlorobium vibrioforme subsp. thiosulfatophilum).